Consider the following 156-residue polypeptide: Peptide deformylase (156 aa).

Fe cation-binding residues include C90 and H132. E133 is a catalytic residue. H136 lines the Fe cation pocket.

This sequence belongs to the polypeptide deformylase family. It depends on Fe(2+) as a cofactor.

The enzyme catalyses N-terminal N-formyl-L-methionyl-[peptide] + H2O = N-terminal L-methionyl-[peptide] + formate. Functionally, removes the formyl group from the N-terminal Met of newly synthesized proteins. Requires at least a dipeptide for an efficient rate of reaction. N-terminal L-methionine is a prerequisite for activity but the enzyme has broad specificity at other positions. The chain is Peptide deformylase from Natranaerobius thermophilus (strain ATCC BAA-1301 / DSM 18059 / JW/NM-WN-LF).